Here is a 553-residue protein sequence, read N- to C-terminus: Efflux pump alnA (553 aa).

Basic and acidic residues predominate over residues 1-21 (MSSDDTVKQEHSCSADSEKQD). A disordered region spans residues 1–36 (MSSDDTVKQEHSCSADSEKQDSSCASDNEQPKEPQS). 13 helical membrane passes run 40–60 (IHGL…FLFA), 85–105 (WSGV…LQIF), 110–130 (IKWM…ICGA), 136–156 (MLIG…VGVM), 174–194 (AMGL…GAFT), 202–222 (WSFY…IFLL), 243–263 (LVGT…INFA), 270–290 (SEPG…VFGI), 319–339 (LLFV…YVIP), 355–375 (VRLL…GYLA), 382–402 (IPWY…MYTI), 413–433 (GYSS…HAVA), and 522–542 (TYIL…GMKW).

The protein belongs to the major facilitator superfamily. TCR/Tet family.

The protein resides in the cell membrane. Efflux pump; part of the gene cluster that mediates the biosynthesis of asperlin, a polyketide showing anti-inflammatory, antitumor and antibiotic activities. Is probably involved in the efflux of asperlin. This chain is Efflux pump alnA, found in Emericella nidulans (strain FGSC A4 / ATCC 38163 / CBS 112.46 / NRRL 194 / M139) (Aspergillus nidulans).